The following is a 578-amino-acid chain: MFRNRRILLYARRFFLVWICFLFITSWSLIQRHLKNWLVQAPDLKLSGSLQDTGIKVRDVRISKCYSWFSNCDAIWDYSLQDDLVTWYRIDMGKMQDTSIGQGFGWTSYVYWQPLYPNERGSAVVDLALSRNGLPLGLANERYNKIKNNDIDGYHVHSNTDNEFYVKDDSSNRFNPDMKWSAKFGNHLEDWFWRGDGIWCKYGRRSNGIKEIKAFIGEDFIESRPMWKEMVHCLHREGYSKPISISFQKSRLDDFTYGKEKDLSQISEPSLVMKRADFKILQISDLHFGRHIVSDSRKEKPDSIFRYDWPNVQFIHSVIRNERPDLAVITGHIFKDFNKNLDYESQILKMVSPIISNGIPFLFTWGEPQVTTEFKVNILNFIKSLPFCLNKFDLKNSTYLMLPLLLPAKTPGSQKQIGTIFAFDSNVTESYNFLDKFPRSPQSVYNLAFQHLPLHEYRPQGSFALIGNYEQKGSLDYIPHTKAFRNLLGEKDIKAISCGHEHGNDCCVLSDGKQQNLKNNMWLCYGGVTGYDQAYESKVRIFKIDTEKNDITSWKRSIKDTSKVSDYQYIWSRTLNTQ.

A signal peptide spans 1–28 (MFRNRRILLYARRFFLVWICFLFITSWS).

Functionally, may be involved in the activation of the plasma membrane proton-ATPase by glucose. This Kluyveromyces lactis (strain ATCC 8585 / CBS 2359 / DSM 70799 / NBRC 1267 / NRRL Y-1140 / WM37) (Yeast) protein is Protein SIA1 (SIA1).